Reading from the N-terminus, the 354-residue chain is Uroporphyrinogen decarboxylase (354 aa).

Residues 27 to 31, D77, Y154, S209, and H327 contribute to the substrate site; that span reads RQAGR.

It belongs to the uroporphyrinogen decarboxylase family. Homodimer.

The protein localises to the cytoplasm. The catalysed reaction is uroporphyrinogen III + 4 H(+) = coproporphyrinogen III + 4 CO2. It functions in the pathway porphyrin-containing compound metabolism; protoporphyrin-IX biosynthesis; coproporphyrinogen-III from 5-aminolevulinate: step 4/4. Functionally, catalyzes the decarboxylation of four acetate groups of uroporphyrinogen-III to yield coproporphyrinogen-III. This is Uroporphyrinogen decarboxylase from Shewanella denitrificans (strain OS217 / ATCC BAA-1090 / DSM 15013).